A 123-amino-acid polypeptide reads, in one-letter code: uncharacterized protein (123 aa).

Residues 100–123 (NKQPKTTHHFSTNSSEYKSRKSKH) form a disordered region.

This is an uncharacterized protein from Acanthamoeba polyphaga mimivirus (APMV).